A 49-amino-acid polypeptide reads, in one-letter code: Small, acid-soluble spore protein O (49 aa).

The segment at 23–49 (AGYNEKFSNEPLTEAQRQNNKKRKKNQ) is disordered.

The protein belongs to the SspO family.

It is found in the spore core. The sequence is that of Small, acid-soluble spore protein O from Geobacillus thermodenitrificans (strain NG80-2).